We begin with the raw amino-acid sequence, 122 residues long: Proximal tubules-expressed gene protein (122 aa).

Residues 33–53 form a helical membrane-spanning segment; the sequence is WLTGLIAMTVFLFLVLVVYVA.

Belongs to the PDZK1-interacting protein 1/SMIM24 family. In terms of tissue distribution, expressed in prospective pronephric mesoderm at the late gastrula stage. After neurulation, expressed in the intermediate mesoderm, eye placode and blood islands. Expression becomes restricted to the pronephric proximal tubule during embryogenesis, but is absent from the connecting tubules.

The protein resides in the membrane. Its function is as follows. Essential for pronephric tubule development, acting upstream of pax8 and lhx1/lim1 and downstream of retinoic acid signaling to induce pronephric mesoderm to form pronephric tubule-specific cells. This is Proximal tubules-expressed gene protein (pteg) from Xenopus laevis (African clawed frog).